The following is a 74-amino-acid chain: Small ribosomal subunit protein bS18 (74 aa).

This sequence belongs to the bacterial ribosomal protein bS18 family. As to quaternary structure, part of the 30S ribosomal subunit. Forms a tight heterodimer with protein bS6.

Its function is as follows. Binds as a heterodimer with protein bS6 to the central domain of the 16S rRNA, where it helps stabilize the platform of the 30S subunit. This chain is Small ribosomal subunit protein bS18, found in Gloeobacter violaceus (strain ATCC 29082 / PCC 7421).